Reading from the N-terminus, the 97-residue chain is Small ribosomal subunit protein bS16c (97 aa).

Belongs to the bacterial ribosomal protein bS16 family.

Its subcellular location is the plastid. The protein resides in the chloroplast. The protein is Small ribosomal subunit protein bS16c of Piper cenocladum (Ant piper).